A 130-amino-acid chain; its full sequence is Ribonuclease VapC46 (130 aa).

Residues 4-118 (IYLDSSAIVK…CTYDDRMRDA (115 aa)) form the PINc domain. D7 and D91 together coordinate Mg(2+).

It belongs to the PINc/VapC protein family. It depends on Mg(2+) as a cofactor.

Toxic component of a type II toxin-antitoxin (TA) system. An RNase. Upon expression in M.smegmatis inhibits colony formation. Its toxic effect is neutralized by coexpression with cognate antitoxin VapB46. The protein is Ribonuclease VapC46 of Mycobacterium tuberculosis (strain ATCC 25618 / H37Rv).